A 406-amino-acid polypeptide reads, in one-letter code: MARAFLLVLDSFGVGGAPDAERYGDLGANTLGHIAEFCAAGAADRAGLRAGPLKLPNMCSLGLLEIARQASGDIPAGMEPPERIFGLHGSASEISKGKDTPSGHWEIAGTPVTFDWGYFPTEGDAFSPELVEAICRQADIPGILGNCHASGTEIIAALGEEHIRSGKPICYTSSDSVFQIAAHETHFGLDRLIALCETVRKLLDPLNIGRVIARPFIGETVATFERTGNRRDFSVPPPEPTLLDRLVEAGRKVHAIGKIGDIYAHQGVTRVIKANGNAALMDATLHAIDEAENGDLVFTNFVDFDMLYGHRRDVAGYAAALEAFDARIPEIHRKMAPGDIALLTADHGCDPTWRGTDHTRERVPIMAFGPGIRSRDVGIRSSYADIGESIAHHLGIEAGSHGRSFI.

Mn(2+)-binding residues include D10, D305, H310, D346, H347, and H358.

Belongs to the phosphopentomutase family. Mn(2+) is required as a cofactor.

The protein resides in the cytoplasm. It carries out the reaction 2-deoxy-alpha-D-ribose 1-phosphate = 2-deoxy-D-ribose 5-phosphate. The catalysed reaction is alpha-D-ribose 1-phosphate = D-ribose 5-phosphate. The protein operates within carbohydrate degradation; 2-deoxy-D-ribose 1-phosphate degradation; D-glyceraldehyde 3-phosphate and acetaldehyde from 2-deoxy-alpha-D-ribose 1-phosphate: step 1/2. Isomerase that catalyzes the conversion of deoxy-ribose 1-phosphate (dRib-1-P) and ribose 1-phosphate (Rib-1-P) to deoxy-ribose 5-phosphate (dRib-5-P) and ribose 5-phosphate (Rib-5-P), respectively. The protein is Phosphopentomutase of Agrobacterium fabrum (strain C58 / ATCC 33970) (Agrobacterium tumefaciens (strain C58)).